Reading from the N-terminus, the 140-residue chain is MAKKVLAMVKLQVQAGKANPSPPIGPALGQHGVNIMEFCKAFNARTADQEGMVIPVVLTVYQDRSFSFITKTPPASVLILKAAKLAKGSSDPKKIKVGKITKAQVEDIANLKMVDLNAKDMAGASKIIAGTARSMGIEVV.

The protein belongs to the universal ribosomal protein uL11 family. In terms of assembly, part of the ribosomal stalk of the 50S ribosomal subunit. Interacts with L10 and the large rRNA to form the base of the stalk. L10 forms an elongated spine to which L12 dimers bind in a sequential fashion forming a multimeric L10(L12)X complex. One or more lysine residues are methylated.

In terms of biological role, forms part of the ribosomal stalk which helps the ribosome interact with GTP-bound translation factors. The protein is Large ribosomal subunit protein uL11 of Desulfatibacillum aliphaticivorans.